Reading from the N-terminus, the 320-residue chain is Cytochrome f (320 aa).

The first 32 residues, 1–32, serve as a signal peptide directing secretion; sequence MKTKKSYDKVTRWVTPPILMLIIIHIITGACS. Tyr-36, Cys-56, Cys-59, and His-60 together coordinate heme. The chain crosses the membrane as a helical span at residues 286 to 306; that stretch reads IQGLLGFLASVVLAQIFLVLK.

The protein belongs to the cytochrome f family. In terms of assembly, the 4 large subunits of the cytochrome b6-f complex are cytochrome b6, subunit IV (17 kDa polypeptide, petD), cytochrome f and the Rieske protein, while the 4 small subunits are PetG, PetL, PetM and PetN. The complex functions as a dimer. Heme is required as a cofactor.

It is found in the plastid. The protein resides in the chloroplast thylakoid membrane. Functionally, component of the cytochrome b6-f complex, which mediates electron transfer between photosystem II (PSII) and photosystem I (PSI), cyclic electron flow around PSI, and state transitions. The chain is Cytochrome f from Gnetum parvifolium (Small-leaved jointfir).